The chain runs to 367 residues: Biotin--protein ligase 1, chloroplastic (367 aa).

Residues 1 to 37 (MEAVRSTTTLSNFHLLNILVLRSLKPLHRLSFSFSAS) constitute a chloroplast transit peptide. The BPL/LPL catalytic domain occupies 105 to 289 (IITHRFGRFL…KFEKFFDLFM (185 aa)). Biotin-binding positions include 122 to 124 (STH), Gln145, 149 to 151 (RGR), and Lys220.

It belongs to the biotin--protein ligase family. Expressed in roots, leaves, stems, flowers, siliques and seeds.

It is found in the plastid. It localises to the chloroplast. Its subcellular location is the cytoplasm. The protein localises to the cytosol. The catalysed reaction is apo-[3-methylcrotonoyl-CoA:carbon-dioxide ligase (ADP-forming)] + biotin + ATP = holo-[3-methylcrotonoyl-CoA:carbon-dioxide ligase (ADP-forming)] + AMP + diphosphate + H(+). It carries out the reaction biotin + L-lysyl-[protein] + ATP = N(6)-biotinyl-L-lysyl-[protein] + AMP + diphosphate + H(+). In terms of biological role, plays a major role in biotin-dependent carboxylase biotinylation. Catalyzes the addition of biotin to the biotin carboxyl carrier protein (BCCP) subunit of acetyl-CoA carboxylase. Can also biotinylate methylcrotonyl-CoA carboxylase. Is responsible for most, if not all, biotin--protein ligase activity in Arabidopsis. Is essential for plant viability and required for ovule development. This is Biotin--protein ligase 1, chloroplastic from Arabidopsis thaliana (Mouse-ear cress).